The primary structure comprises 196 residues: DnaA initiator-associating protein DiaA (196 aa).

An SIS domain is found at 34-196; the sequence is LVQSLLNGNK…DNTLFPHQDV (163 aa).

It belongs to the SIS family. DiaA subfamily. In terms of assembly, homotetramer; dimer of dimers.

Functionally, required for the timely initiation of chromosomal replication via direct interactions with the DnaA initiator protein. This Escherichia coli O6:K15:H31 (strain 536 / UPEC) protein is DnaA initiator-associating protein DiaA.